Consider the following 275-residue polypeptide: Dermonecrotic toxin LamSicTox-alphaIV1iii (275 aa).

Residue His-5 is part of the active site. Mg(2+) contacts are provided by Glu-25 and Asp-27. His-41 acts as the Nucleophile in catalysis. 2 disulfide bridges follow: Cys-45–Cys-51 and Cys-47–Cys-192. Asp-85 is a Mg(2+) binding site.

It belongs to the arthropod phospholipase D family. Class II subfamily. The cofactor is Mg(2+). Expressed by the venom gland.

It is found in the secreted. The enzyme catalyses an N-(acyl)-sphingosylphosphocholine = an N-(acyl)-sphingosyl-1,3-cyclic phosphate + choline. It catalyses the reaction an N-(acyl)-sphingosylphosphoethanolamine = an N-(acyl)-sphingosyl-1,3-cyclic phosphate + ethanolamine. It carries out the reaction a 1-acyl-sn-glycero-3-phosphocholine = a 1-acyl-sn-glycero-2,3-cyclic phosphate + choline. The catalysed reaction is a 1-acyl-sn-glycero-3-phosphoethanolamine = a 1-acyl-sn-glycero-2,3-cyclic phosphate + ethanolamine. Functionally, dermonecrotic toxins cleave the phosphodiester linkage between the phosphate and headgroup of certain phospholipids (sphingolipid and lysolipid substrates), forming an alcohol (often choline) and a cyclic phosphate. This toxin acts on sphingomyelin (SM). It may also act on ceramide phosphoethanolamine (CPE), lysophosphatidylcholine (LPC) and lysophosphatidylethanolamine (LPE), but not on lysophosphatidylserine (LPS), and lysophosphatidylglycerol (LPG). It acts by transphosphatidylation, releasing exclusively cyclic phosphate products as second products. Induces dermonecrosis, hemolysis, increased vascular permeability, edema, inflammatory response, and platelet aggregation. The polypeptide is Dermonecrotic toxin LamSicTox-alphaIV1iii (Loxosceles amazonica (Recluse spider)).